Reading from the N-terminus, the 314-residue chain is Bis(5'-nucleosyl)-tetraphosphatase, symmetrical (314 aa).

The disordered stretch occupies residues 267–314 (QVPGNPITHPPKTAQRPRQPRRRQRQRGGDQAQTGPAPTPASTGPAGG). Low complexity predominate over residues 297–314 (QAQTGPAPTPASTGPAGG).

Belongs to the Ap4A hydrolase family.

The enzyme catalyses P(1),P(4)-bis(5'-adenosyl) tetraphosphate + H2O = 2 ADP + 2 H(+). Its function is as follows. Hydrolyzes diadenosine 5',5'''-P1,P4-tetraphosphate to yield ADP. This chain is Bis(5'-nucleosyl)-tetraphosphatase, symmetrical, found in Xanthomonas axonopodis pv. citri (strain 306).